A 336-amino-acid polypeptide reads, in one-letter code: Potassium channel subfamily K member 1 (336 aa).

Over 1-20 (MLQSLAGSSCVRLVERHRSA) the chain is Cytoplasmic. The chain crosses the membrane as a helical span at residues 21 to 41 (WCFGFLVLGYLLYLVFGAVVF). Over 42–103 (SSVELPYEDL…SNASGNWNWD (62 aa)) the chain is Extracellular. A glycan (N-linked (GlcNAc...) asparagine) is linked at asparagine 95. The helical intramembrane region spans 104–116 (FASALFFASTVLS). Residues 117-122 (TTGYGH) lie within the membrane without spanning it. A selectivity filter 1 region spans residues 117–122 (TTGYGH). Residues 123–132 (TVPLSDGGKA) are Extracellular-facing. A helical transmembrane segment spans residues 133-156 (FCIIYSVIGIPFTLLFLTAVVQRV). The Cytoplasmic portion of the chain corresponds to 157–181 (TVHVTRRPVLYFHVRWGFSKQVVAI). A helical membrane pass occupies residues 182-202 (VHAVLLGLITVSCFFFIPAAV). The Extracellular segment spans residues 203–211 (FSVLEDDWN). Residues 212–224 (FLESFYFCFISLS) constitute an intramembrane region (helical). The tract at residues 225 to 230 (TIGLGD) is selectivity filter 2. Residues 225–231 (TIGLGDY) lie within the membrane without spanning it. Residues 232–243 (VPGEGYNQKFRE) are Extracellular-facing. A helical membrane pass occupies residues 244-267 (LYKIGITCYLLLGLIAMLVVLETF). Residues 268 to 336 (CELHELKKFR…SACADGPANH (69 aa)) lie on the Cytoplasmic side of the membrane. Lysine 274 participates in a covalent cross-link: Glycyl lysine isopeptide (Lys-Gly) (interchain with G-Cter in SUMO). The important for intracellular retention in recycling endosomes stretch occupies residues 293–299 (IIEHDQL). The tract at residues 315 to 336 (QKQNEPFVATPSSACADGPANH) is disordered. At serine 326 the chain carries Phosphoserine.

It belongs to the two pore domain potassium channel (TC 1.A.1.8) family. As to quaternary structure, homodimer; disulfide-linked. Heterodimer with KCNK2; disulfide-linked. In astrocytes, forms mostly heterodimeric potassium channels with KCNK2, with only a minor proportion of functional channels containing homodimeric KCNK1. Interacts with KCNK3 and KCNK9, forming functional heterodimeric channels. Interacts with GNG4. Identified in a complex with PSD and ARF6; interacts only with PSD that is bound to ARF6. Interacts with UBE2I. Sumoylation is controversial. Sumoylated by UBE2I. Not sumoylated when expressed in xenopus oocytes or mammalian cells. Sumoylation inactivates the channel, but does not interfere with expression at the cell membrane. Sumoylation of a single subunit is sufficient to silence the dimeric channel. Sumoylation of KCNK1 is sufficient to silence heterodimeric channels formed by KCNK1 and KCNK3 or KCNK9. Desumoylated by SENP1; this activates the channel. Desumoylated by SENP1; this strongly increases halothane-mediated activation of heterodimeric channels formed with KCNK9. SENP1 treatment has no effect. In terms of tissue distribution, expressed in renal distal tubules, especially in cortical collecting duct and cortical thick ascending limb, with lower levels in the connecting tubule.

Its subcellular location is the cell membrane. It localises to the recycling endosome. It is found in the synaptic cell membrane. The protein localises to the cytoplasmic vesicle. The protein resides in the perikaryon. Its subcellular location is the cell projection. It localises to the dendrite. It is found in the apical cell membrane. The catalysed reaction is K(+)(in) = K(+)(out). The enzyme catalyses NH4(+)(in) = NH4(+)(out). It catalyses the reaction Na(+)(in) = Na(+)(out). It carries out the reaction Rb(+)(in) = Rb(+)(out). The catalysed reaction is Cs(+)(in) = Cs(+)(out). The enzyme catalyses Li(+)(in) = Li(+)(out). It catalyses the reaction L-glutamate(out) = L-glutamate(in). It carries out the reaction chloride(in) = chloride(out). Ion channel that contributes to passive transmembrane potassium transport and to the regulation of the resting membrane potential in brain astrocytes, but also in kidney and in other tissues. Forms dimeric channels through which potassium ions pass in accordance with their electrochemical gradient. The channel is selective for K(+) ions at physiological potassium concentrations and at neutral pH, but becomes permeable to Na(+) at subphysiological K(+) levels and upon acidification of the extracellular medium. The homodimer has very low potassium channel activity, when expressed in heterologous systems, and can function as weakly inward rectifying potassium channel. Channel activity is modulated by activation of serotonin receptors. Heterodimeric channels containing KCNK1 and KCNK2 have much higher activity, and may represent the predominant form in astrocytes. Heterodimeric channels containing KCNK1 and KCNK3 or KCNK9 have much higher activity. Heterodimeric channels formed by KCNK1 and KCNK9 may contribute to halothane-sensitive currents. Mediates outward rectifying potassium currents in dentate gyrus granule cells and contributes to the regulation of their resting membrane potential. Contributes to the regulation of action potential firing in dentate gyrus granule cells and down-regulates their intrinsic excitability. In astrocytes, the heterodimer formed by KCNK1 and KCNK2 is required for rapid glutamate release in response to activation of G-protein coupled receptors, such as F2R and CNR1. Required for normal ion and water transport in the kidney. Contributes to the regulation of the resting membrane potential of pancreatic beta cells. The low channel activity of homodimeric KCNK1 may be due to sumoylation. The low channel activity may be due to rapid internalization from the cell membrane and retention in recycling endosomes. Permeable to monovalent cations with ion selectivity for K(+) &gt; Rb(+) &gt;&gt; NH4(+) &gt;&gt; Cs(+) = Na(+) = Li(+). This chain is Potassium channel subfamily K member 1, found in Oryctolagus cuniculus (Rabbit).